Consider the following 317-residue polypeptide: Beta-ketoacyl-[acyl-carrier-protein] synthase III (317 aa).

Active-site residues include cysteine 112 and histidine 244. The segment at 245-249 (QANLR) is ACP-binding. Residue asparagine 274 is part of the active site.

It belongs to the thiolase-like superfamily. FabH family. In terms of assembly, homodimer.

The protein localises to the cytoplasm. It catalyses the reaction malonyl-[ACP] + acetyl-CoA + H(+) = 3-oxobutanoyl-[ACP] + CO2 + CoA. It participates in lipid metabolism; fatty acid biosynthesis. Catalyzes the condensation reaction of fatty acid synthesis by the addition to an acyl acceptor of two carbons from malonyl-ACP. Catalyzes the first condensation reaction which initiates fatty acid synthesis and may therefore play a role in governing the total rate of fatty acid production. Possesses both acetoacetyl-ACP synthase and acetyl transacylase activities. Its substrate specificity determines the biosynthesis of branched-chain and/or straight-chain of fatty acids. In Pasteurella multocida (strain Pm70), this protein is Beta-ketoacyl-[acyl-carrier-protein] synthase III.